The following is a 231-amino-acid chain: NADH-ubiquinone oxidoreductase chain 4 (231 aa).

A run of 6 helical transmembrane segments spans residues 1–21 (PIAGSMVLAAILLKLGGYGII), 34–54 (LFIPFITLALWGATLANLTCL), 61–80 (SLIAYSSISHMGLVVAAITI), 84–106 (WGLSGAMALMIAHGFTSSALFCL), 118–138 (VLILTRGLHNILPMATTWWLL), and 156–178 (LLIMSSLFNWCPTTIILLGLSML).

Belongs to the complex I subunit 4 family.

It localises to the mitochondrion membrane. It carries out the reaction a ubiquinone + NADH + 5 H(+)(in) = a ubiquinol + NAD(+) + 4 H(+)(out). Core subunit of the mitochondrial membrane respiratory chain NADH dehydrogenase (Complex I) that is believed to belong to the minimal assembly required for catalysis. Complex I functions in the transfer of electrons from NADH to the respiratory chain. The immediate electron acceptor for the enzyme is believed to be ubiquinone. The polypeptide is NADH-ubiquinone oxidoreductase chain 4 (MT-ND4) (Azemiops feae (Fea's viper)).